A 259-amino-acid chain; its full sequence is MSRRRQIYEGKAKILYEGPEPGTIIQYFKDDATAFNAQKKGMISGKGVINNRVSEHIFTLLAGIGIPTHFIRRLNMREQLVKQVEIIPIEVVIRNVAAGSLSKRLGIEEGTPLPRTIIEYYYKDDALNDPMVADEHIACFGWATQEEMHDIADMAIRVNDFMSGLFAAINIRLVDFKLEFGRVWENDYSRVLLADEISPDGCRLWDMVTNEKLDKDRFRQDLGGEVEAYQEIARRLGLLPVEPDTEVLDLESHRKNRGL.

This sequence belongs to the SAICAR synthetase family.

It carries out the reaction 5-amino-1-(5-phospho-D-ribosyl)imidazole-4-carboxylate + L-aspartate + ATP = (2S)-2-[5-amino-1-(5-phospho-beta-D-ribosyl)imidazole-4-carboxamido]succinate + ADP + phosphate + 2 H(+). The protein operates within purine metabolism; IMP biosynthesis via de novo pathway; 5-amino-1-(5-phospho-D-ribosyl)imidazole-4-carboxamide from 5-amino-1-(5-phospho-D-ribosyl)imidazole-4-carboxylate: step 1/2. In Zymomonas mobilis subsp. mobilis (strain ATCC 31821 / ZM4 / CP4), this protein is Phosphoribosylaminoimidazole-succinocarboxamide synthase.